The following is an 846-amino-acid chain: Envelope glycoprotein gp160 (846 aa).

Positions 1-31 (MRAREKERNCQNLWKWGIMLLGMLMTCSAAE) are cleaved as a signal peptide. Residues 32–674 (DLWVTVYYGV…ITKWLWYIKL (643 aa)) are Extracellular-facing. The cysteines at positions 53 and 73 are disulfide-linked. N-linked (GlcNAc...) asparagine; by host glycosylation is found at asparagine 87, asparagine 129, asparagine 151, asparagine 179, asparagine 182, asparagine 229, asparagine 236, asparagine 257, asparagine 271, asparagine 284, and asparagine 290. Disulfide bonds link cysteine 118–cysteine 200, cysteine 125–cysteine 191, cysteine 130–cysteine 152, cysteine 213–cysteine 242, and cysteine 223–cysteine 234. Residues 130–151 (CTDELRNSKGNGKVEEEEKRKN) form a V1 region. Positions 152 to 191 (CSFNVRDKREQVYALFYKLDIVPIDNNNRTNSTNYRLINC) are V2. The V3 stretch occupies residues 291–327 (CTRPYKYTRQRTSIGLRQSLYTITGKKKKTGYIGQAH). Cysteine 291 and cysteine 328 are joined by a disulfide. N-linked (GlcNAc...) asparagine; by host glycosylation occurs at asparagine 351. The CD4-binding loop stretch occupies residues 360 to 370 (SSGGDPEITSH). Disulfide bonds link cysteine 374/cysteine 435 and cysteine 381/cysteine 408. Residues 381–408 (CNTSRLFNSTWNQTNSTGFNNGTVTLPC) are V4. N-linked (GlcNAc...) asparagine; by host glycosylation is found at asparagine 382, asparagine 388, asparagine 392, asparagine 395, asparagine 401, asparagine 438, asparagine 451, and asparagine 452. V5 stretches follow at residues 450–461 (ANNSSHETIRPG) and 453–461 (SSHETIRPG). Residues 502 to 522 (AIGLGAVFLGFLGAAGSTMGA) are fusion peptide. The immunosuppression stretch occupies residues 564–582 (KQLQARVLAVERYLRDQQL). Cysteines 588 and 594 form a disulfide. Asparagine 601, asparagine 606, asparagine 615, and asparagine 627 each carry an N-linked (GlcNAc...) asparagine; by host glycan. Positions 623-657 (REIDNYTGLIYSLIEESQIQQEKNEKELLELDKWA) form a coiled coil. Residues 652-673 (ELDKWASLWNWFSITKWLWYIK) are MPER; binding to GalCer. Residues 675–695 (FIMIVGGLIGLRIVFAVLSVV) traverse the membrane as a helical segment. Residues 696–846 (NRVRQGYSPL…IRQGLERLLL (151 aa)) lie on the Cytoplasmic side of the membrane. The short motif at 702–705 (YSPL) is the YXXL motif; contains endocytosis signal element. 2 S-palmitoyl cysteine; by host lipidation sites follow: cysteine 754 and cysteine 827. Residues 845–846 (LL) carry the Di-leucine internalization motif motif.

It belongs to the HIV-1 env protein family. In terms of assembly, the mature envelope protein (Env) consists of a homotrimer of non-covalently associated gp120-gp41 heterodimers. The resulting complex protrudes from the virus surface as a spike. There seems to be as few as 10 spikes on the average virion. Interacts with host CD4, CCR5 and CXCR4. Gp120 also interacts with the C-type lectins CD209/DC-SIGN and CLEC4M/DC-SIGNR (collectively referred to as DC-SIGN(R)). Gp120 and gp41 interact with GalCer. Gp120 interacts with host ITGA4/ITGB7 complex; on CD4+ T-cells, this interaction results in rapid activation of integrin ITGAL/LFA-1, which facilitates efficient cell-to-cell spreading of HIV-1. Gp120 interacts with cell-associated heparan sulfate; this interaction increases virus infectivity on permissive cells and may be involved in infection of CD4- cells. As to quaternary structure, the mature envelope protein (Env) consists of a homotrimer of non-covalently associated gp120-gp41 heterodimers. The resulting complex protrudes from the virus surface as a spike. There seems to be as few as 10 spikes on the average virion. Post-translationally, highly glycosylated by host. The high number of glycan on the protein is reffered to as 'glycan shield' because it contributes to hide protein sequence from adaptive immune system. In terms of processing, palmitoylation of the transmembrane protein and of Env polyprotein (prior to its proteolytic cleavage) is essential for their association with host cell membrane lipid rafts. Palmitoylation is therefore required for envelope trafficking to classical lipid rafts, but not for viral replication. Specific enzymatic cleavages in vivo yield mature proteins. Envelope glycoproteins are synthesized as an inactive precursor that is heavily N-glycosylated and processed likely by host cell furin in the Golgi to yield the mature SU and TM proteins. The cleavage site between SU and TM requires the minimal sequence [KR]-X-[KR]-R. About 2 of the 9 disulfide bonds of gp41 are reduced by P4HB/PDI, following binding to CD4 receptor.

Its subcellular location is the virion membrane. It is found in the host cell membrane. It localises to the host endosome membrane. Its function is as follows. Oligomerizes in the host endoplasmic reticulum into predominantly trimers. In a second time, gp160 transits in the host Golgi, where glycosylation is completed. The precursor is then proteolytically cleaved in the trans-Golgi and thereby activated by cellular furin or furin-like proteases to produce gp120 and gp41. Functionally, attaches the virus to the host lymphoid cell by binding to the primary receptor CD4. This interaction induces a structural rearrangement creating a high affinity binding site for a chemokine coreceptor like CXCR4 and/or CCR5. Acts as a ligand for CD209/DC-SIGN and CLEC4M/DC-SIGNR, which are respectively found on dendritic cells (DCs), and on endothelial cells of liver sinusoids and lymph node sinuses. These interactions allow capture of viral particles at mucosal surfaces by these cells and subsequent transmission to permissive cells. HIV subverts the migration properties of dendritic cells to gain access to CD4+ T-cells in lymph nodes. Virus transmission to permissive T-cells occurs either in trans (without DCs infection, through viral capture and transmission), or in cis (following DCs productive infection, through the usual CD4-gp120 interaction), thereby inducing a robust infection. In trans infection, bound virions remain infectious over days and it is proposed that they are not degraded, but protected in non-lysosomal acidic organelles within the DCs close to the cell membrane thus contributing to the viral infectious potential during DCs' migration from the periphery to the lymphoid tissues. On arrival at lymphoid tissues, intact virions recycle back to DCs' cell surface allowing virus transmission to CD4+ T-cells. In terms of biological role, acts as a class I viral fusion protein. Under the current model, the protein has at least 3 conformational states: pre-fusion native state, pre-hairpin intermediate state, and post-fusion hairpin state. During fusion of viral and target intracellular membranes, the coiled coil regions (heptad repeats) assume a trimer-of-hairpins structure, positioning the fusion peptide in close proximity to the C-terminal region of the ectodomain. The formation of this structure appears to drive apposition and subsequent fusion of viral and target cell membranes. Complete fusion occurs in host cell endosomes and is dynamin-dependent, however some lipid transfer might occur at the plasma membrane. The virus undergoes clathrin-dependent internalization long before endosomal fusion, thus minimizing the surface exposure of conserved viral epitopes during fusion and reducing the efficacy of inhibitors targeting these epitopes. Membranes fusion leads to delivery of the nucleocapsid into the cytoplasm. In Human immunodeficiency virus type 1 group M subtype D (isolate NDK) (HIV-1), this protein is Envelope glycoprotein gp160.